A 71-amino-acid polypeptide reads, in one-letter code: Cytotoxic linear peptide IsCT2 (71 aa).

Residues 1-23 form the signal peptide; that stretch reads MKTQFAILLVALVLFQMFAQSEA. Phenylalanine amide is present on Phe-36. The propeptide occupies 40–71; the sequence is ALNNDLDLDGLDELFDGEISQADVDFLKELMR.

It belongs to the non-disulfide-bridged peptide (NDBP) superfamily. Short antimicrobial peptide (group 4) family. Post-translationally, isCT2F is an enzymatic proteolytic cleavage product of IsCT2 by the proteases present in the venom. As to expression, expressed by the venom gland.

Its subcellular location is the secreted. The protein resides in the target cell membrane. In terms of biological role, isCT2 shows weak hemolytic activity and antibacterial activity against both Gram-positive and Gram-negative bacteria probably by forming pores in the cell membrane. IsCT2 adopts an amphipathic alpha-helical structure. Functionally, isCT2f shows neither hemolytic, nor antibacterial activities, surely due to the fact that it cannot apply amphipathic alpha-helical structure. The chain is Cytotoxic linear peptide IsCT2 from Opisthacanthus madagascariensis (Scorpion).